The following is a 280-amino-acid chain: Putative protein-tyrosine sulfotransferase (280 aa).

16 to 20 (RSGTT) lines the 3'-phosphoadenylyl sulfate pocket. Cysteines 34 and 89 form a disulfide. The active-site Proton donor/acceptor is E37. The N-linked (GlcNAc...) asparagine glycan is linked to N57. 3 residues coordinate 3'-phosphoadenylyl sulfate: R116, S124, and R128. Residue N136 is glycosylated (N-linked (GlcNAc...) asparagine). Cysteines 158 and 165 form a disulfide. Residues Y170 and 215–224 (SASQVKNSIN) each bind 3'-phosphoadenylyl sulfate.

This sequence belongs to the protein sulfotransferase family.

It carries out the reaction L-tyrosyl-[protein] + 3'-phosphoadenylyl sulfate = O-sulfo-L-tyrosine-[protein] + adenosine 3',5'-bisphosphate + H(+). Catalyzes the O-sulfation of tyrosine residues within acidic motifs of polypeptides, using 3'-phosphoadenylyl sulfate (PAPS) as cosubstrate. The sequence is that of Putative protein-tyrosine sulfotransferase from Caenorhabditis briggsae.